We begin with the raw amino-acid sequence, 97 residues long: Co-chaperonin GroES (97 aa).

Belongs to the GroES chaperonin family. Heptamer of 7 subunits arranged in a ring. Interacts with the chaperonin GroEL.

The protein resides in the cytoplasm. Functionally, together with the chaperonin GroEL, plays an essential role in assisting protein folding. The GroEL-GroES system forms a nano-cage that allows encapsulation of the non-native substrate proteins and provides a physical environment optimized to promote and accelerate protein folding. GroES binds to the apical surface of the GroEL ring, thereby capping the opening of the GroEL channel. In Pseudarthrobacter chlorophenolicus (strain ATCC 700700 / DSM 12829 / CIP 107037 / JCM 12360 / KCTC 9906 / NCIMB 13794 / A6) (Arthrobacter chlorophenolicus), this protein is Co-chaperonin GroES.